The primary structure comprises 446 residues: Phosphoglucosamine mutase (446 aa).

The active-site Phosphoserine intermediate is Ser-99. Mg(2+) contacts are provided by Ser-99, Asp-242, Asp-244, and Asp-246. Position 99 is a phosphoserine (Ser-99).

The protein belongs to the phosphohexose mutase family. Requires Mg(2+) as cofactor. In terms of processing, activated by phosphorylation.

It carries out the reaction alpha-D-glucosamine 1-phosphate = D-glucosamine 6-phosphate. Functionally, catalyzes the conversion of glucosamine-6-phosphate to glucosamine-1-phosphate. This chain is Phosphoglucosamine mutase, found in Campylobacter fetus subsp. fetus (strain 82-40).